The primary structure comprises 1700 residues: uncharacterized protein (1700 aa).

A helical membrane pass occupies residues 986–1006; the sequence is APITQYPVLCYLLYLLSYYLV. Coiled coils occupy residues 1246-1278 and 1657-1684; these read DQNA…REIK and QDMD…IEGD. The segment at 1650–1700 is disordered; the sequence is DTEPDIMQDMDGEPQEADELEDLKEEAESLDIEGDYFAEEDEDYAQEDFIE. Residues 1651–1700 show a composition bias toward acidic residues; it reads TEPDIMQDMDGEPQEADELEDLKEEAESLDIEGDYFAEEDEDYAQEDFIE.

It is found in the host membrane. Its subcellular location is the virion. This is an uncharacterized protein from Acanthamoeba polyphaga (Amoeba).